The chain runs to 187 residues: Ubiquinone biosynthesis protein COQ4 homolog, mitochondrial (187 aa).

H77, D78, H81, and E93 together coordinate Zn(2+).

Belongs to the COQ4 family. In terms of assembly, component of a multi-subunit COQ enzyme complex. Requires Zn(2+) as cofactor.

Its subcellular location is the mitochondrion inner membrane. The enzyme catalyses a 4-hydroxy-3-methoxy-5-(all-trans-polyprenyl)benzoate + H(+) = a 2-methoxy-6-(all-trans-polyprenyl)phenol + CO2. The protein operates within cofactor biosynthesis; ubiquinone biosynthesis. Lyase that catalyzes the C1-decarboxylation of 4-hydroxy-3-methoxy-5-(all-trans-polyprenyl)benzoic acid into 2-methoxy-6-(all-trans-polyprenyl)phenol during ubiquinone biosynthesis. The sequence is that of Ubiquinone biosynthesis protein COQ4 homolog, mitochondrial from Leishmania braziliensis.